The sequence spans 173 residues: Crossover junction endodeoxyribonuclease RuvC (173 aa).

Catalysis depends on residues Asp-8, Glu-67, and Asp-139. Mg(2+) is bound by residues Asp-8, Glu-67, and Asp-139.

This sequence belongs to the RuvC family. Homodimer which binds Holliday junction (HJ) DNA. The HJ becomes 2-fold symmetrical on binding to RuvC with unstacked arms; it has a different conformation from HJ DNA in complex with RuvA. In the full resolvosome a probable DNA-RuvA(4)-RuvB(12)-RuvC(2) complex forms which resolves the HJ. Requires Mg(2+) as cofactor.

Its subcellular location is the cytoplasm. The catalysed reaction is Endonucleolytic cleavage at a junction such as a reciprocal single-stranded crossover between two homologous DNA duplexes (Holliday junction).. In terms of biological role, the RuvA-RuvB-RuvC complex processes Holliday junction (HJ) DNA during genetic recombination and DNA repair. Endonuclease that resolves HJ intermediates. Cleaves cruciform DNA by making single-stranded nicks across the HJ at symmetrical positions within the homologous arms, yielding a 5'-phosphate and a 3'-hydroxyl group; requires a central core of homology in the junction. The consensus cleavage sequence is 5'-(A/T)TT(C/G)-3'. Cleavage occurs on the 3'-side of the TT dinucleotide at the point of strand exchange. HJ branch migration catalyzed by RuvA-RuvB allows RuvC to scan DNA until it finds its consensus sequence, where it cleaves and resolves the cruciform DNA. This Salmonella arizonae (strain ATCC BAA-731 / CDC346-86 / RSK2980) protein is Crossover junction endodeoxyribonuclease RuvC.